The primary structure comprises 354 residues: Peptide chain release factor 1 (354 aa).

Q230 carries the post-translational modification N5-methylglutamine.

Belongs to the prokaryotic/mitochondrial release factor family. In terms of processing, methylated by PrmC. Methylation increases the termination efficiency of RF1.

The protein localises to the cytoplasm. Peptide chain release factor 1 directs the termination of translation in response to the peptide chain termination codons UAG and UAA. In Leptospira interrogans serogroup Icterohaemorrhagiae serovar copenhageni (strain Fiocruz L1-130), this protein is Peptide chain release factor 1.